The primary structure comprises 372 residues: Methylthioribose-1-phosphate isomerase 1 (372 aa).

Aspartate 254 acts as the Proton donor in catalysis.

The protein belongs to the eIF-2B alpha/beta/delta subunits family. MtnA subfamily.

It is found in the cytoplasm. The protein resides in the nucleus. It catalyses the reaction 5-(methylsulfanyl)-alpha-D-ribose 1-phosphate = 5-(methylsulfanyl)-D-ribulose 1-phosphate. It participates in amino-acid biosynthesis; L-methionine biosynthesis via salvage pathway; L-methionine from S-methyl-5-thio-alpha-D-ribose 1-phosphate: step 1/6. Its function is as follows. Catalyzes the interconversion of methylthioribose-1-phosphate (MTR-1-P) into methylthioribulose-1-phosphate (MTRu-1-P). This is Methylthioribose-1-phosphate isomerase 1 from Trypanosoma cruzi (strain CL Brener).